A 552-amino-acid polypeptide reads, in one-letter code: Capsid protein precursor (552 aa).

The tract at residues methionine 1–glutamate 41 is disordered. Over residues threonine 9–arginine 28 the composition is skewed to basic residues.

In terms of assembly, homodimer. Post-translationally, the 7 kDa polypeptide is acetylated. In terms of processing, autocatalytic proteolysis releases a post-translationally modified peptide that remains associated with nucleic acid within the virion. This peptide is observed only when nucleic acid is packaged in the capsid.

The protein localises to the virion. The capsid protein self-assembles to form an icosahedral capsid with a T=2 symmetry made of 120 subunits. The chain is Capsid protein precursor (Segment-1) from Human picobirnavirus (strain Human/Thailand/Hy005102/-) (PBV).